The chain runs to 677 residues: Threonine--tRNA ligase (677 aa).

A TGS domain is found at M1–A59. Residues D255 to P561 form a catalytic region. Residues C360, H411, and H538 each coordinate Zn(2+).

Belongs to the class-II aminoacyl-tRNA synthetase family. Homodimer. Requires Zn(2+) as cofactor.

It localises to the cytoplasm. It catalyses the reaction tRNA(Thr) + L-threonine + ATP = L-threonyl-tRNA(Thr) + AMP + diphosphate + H(+). Functionally, catalyzes the attachment of threonine to tRNA(Thr) in a two-step reaction: L-threonine is first activated by ATP to form Thr-AMP and then transferred to the acceptor end of tRNA(Thr). Also edits incorrectly charged L-seryl-tRNA(Thr). The chain is Threonine--tRNA ligase from Bifidobacterium longum (strain NCC 2705).